The following is a 527-amino-acid chain: Pyruvate kinase 1, cytosolic (527 aa).

R58 lines the substrate pocket. Residues D60, S62, D92, and T93 each coordinate K(+). ATP is bound at residue 60 to 63 (DFSW). Substrate is bound at residue K256. Mg(2+) is bound at residue E258. Residues G281, N282, and T313 each coordinate substrate. Residue N282 coordinates Mg(2+).

Belongs to the pyruvate kinase family. In terms of assembly, homotetramer. Requires Mg(2+) as cofactor. It depends on K(+) as a cofactor.

It is found in the cytoplasm. The protein resides in the cytosol. It carries out the reaction pyruvate + ATP = phosphoenolpyruvate + ADP + H(+). It functions in the pathway carbohydrate degradation; glycolysis; pyruvate from D-glyceraldehyde 3-phosphate: step 5/5. In terms of biological role, key regulatory enzyme of the glycolytic pathway that catalyzes the final step of glycolysis, converting ADP and phosphoenolpyruvate (PEP) to ATP and pyruvate by essentially irreversible transphosphorylation. Is critical for plant growth and development. The protein is Pyruvate kinase 1, cytosolic of Oryza sativa subsp. indica (Rice).